The sequence spans 235 residues: UPF0749 protein YlxX (235 aa).

Residues 6 to 26 (SFISISVLMVIFGLMISVQFN) traverse the membrane as a helical segment.

It belongs to the UPF0749 family.

It is found in the cell membrane. The chain is UPF0749 protein YlxX (ylxX) from Bacillus subtilis (strain 168).